The following is a 217-amino-acid chain: Adapter protein MecA (217 aa).

The protein belongs to the MecA family. As to quaternary structure, homodimer.

Enables the recognition and targeting of unfolded and aggregated proteins to the ClpC protease or to other proteins involved in proteolysis. In Listeria innocua serovar 6a (strain ATCC BAA-680 / CLIP 11262), this protein is Adapter protein MecA.